A 314-amino-acid polypeptide reads, in one-letter code: D-alanine--D-alanine ligase (314 aa).

Residues 114-309 form the ATP-grasp domain; that stretch reads KQLWRAHGLP…FDALVLRILD (196 aa). 140-195 is a binding site for ATP; sequence IEALGLPLIVKPVHEGSTIGISIVETRDALIAAHAEASRFDSAIMAERFVQGEEYT. Aspartate 263, glutamate 276, and asparagine 278 together coordinate Mg(2+).

The protein belongs to the D-alanine--D-alanine ligase family. The cofactor is Mg(2+). Mn(2+) is required as a cofactor.

Its subcellular location is the cytoplasm. It carries out the reaction 2 D-alanine + ATP = D-alanyl-D-alanine + ADP + phosphate + H(+). The protein operates within cell wall biogenesis; peptidoglycan biosynthesis. Its function is as follows. Cell wall formation. This Chromohalobacter salexigens (strain ATCC BAA-138 / DSM 3043 / CIP 106854 / NCIMB 13768 / 1H11) protein is D-alanine--D-alanine ligase.